Here is a 453-residue protein sequence, read N- to C-terminus: Bifunctional protein GlmU (453 aa).

A pyrophosphorylase region spans residues 1–225 (MNIVILAAGT…EWETLGVNSK (225 aa)). UDP-N-acetyl-alpha-D-glucosamine-binding positions include 6 to 9 (LAAG), Lys20, Gln71, 76 to 77 (GT), 98 to 100 (YGD), Gly135, Glu150, Asn165, and Asn223. Asp100 contributes to the Mg(2+) binding site. Position 223 (Asn223) interacts with Mg(2+). Positions 226 to 246 (AQLAELERIHQRTIADALLVD) are linker. The tract at residues 247-453 (GVTLADPARV…GYVRPVKKKS (207 aa)) is N-acetyltransferase. UDP-N-acetyl-alpha-D-glucosamine is bound by residues Arg329 and Lys347. Catalysis depends on His359, which acts as the Proton acceptor. 2 residues coordinate UDP-N-acetyl-alpha-D-glucosamine: Tyr362 and Asn373. Acetyl-CoA-binding positions include Ala376, 382 to 383 (NY), Ser401, and Ala419.

This sequence in the N-terminal section; belongs to the N-acetylglucosamine-1-phosphate uridyltransferase family. In the C-terminal section; belongs to the transferase hexapeptide repeat family. In terms of assembly, homotrimer. Requires Mg(2+) as cofactor.

Its subcellular location is the cytoplasm. The enzyme catalyses alpha-D-glucosamine 1-phosphate + acetyl-CoA = N-acetyl-alpha-D-glucosamine 1-phosphate + CoA + H(+). It carries out the reaction N-acetyl-alpha-D-glucosamine 1-phosphate + UTP + H(+) = UDP-N-acetyl-alpha-D-glucosamine + diphosphate. It participates in nucleotide-sugar biosynthesis; UDP-N-acetyl-alpha-D-glucosamine biosynthesis; N-acetyl-alpha-D-glucosamine 1-phosphate from alpha-D-glucosamine 6-phosphate (route II): step 2/2. Its pathway is nucleotide-sugar biosynthesis; UDP-N-acetyl-alpha-D-glucosamine biosynthesis; UDP-N-acetyl-alpha-D-glucosamine from N-acetyl-alpha-D-glucosamine 1-phosphate: step 1/1. The protein operates within bacterial outer membrane biogenesis; LPS lipid A biosynthesis. Its function is as follows. Catalyzes the last two sequential reactions in the de novo biosynthetic pathway for UDP-N-acetylglucosamine (UDP-GlcNAc). The C-terminal domain catalyzes the transfer of acetyl group from acetyl coenzyme A to glucosamine-1-phosphate (GlcN-1-P) to produce N-acetylglucosamine-1-phosphate (GlcNAc-1-P), which is converted into UDP-GlcNAc by the transfer of uridine 5-monophosphate (from uridine 5-triphosphate), a reaction catalyzed by the N-terminal domain. The polypeptide is Bifunctional protein GlmU (Burkholderia ambifaria (strain MC40-6)).